Here is a 1377-residue protein sequence, read N- to C-terminus: DNA-directed RNA polymerase subunit beta (1377 aa).

This sequence belongs to the RNA polymerase beta chain family. As to quaternary structure, the RNAP catalytic core consists of 2 alpha, 1 beta, 1 beta' and 1 omega subunit. When a sigma factor is associated with the core the holoenzyme is formed, which can initiate transcription.

The catalysed reaction is RNA(n) + a ribonucleoside 5'-triphosphate = RNA(n+1) + diphosphate. Its function is as follows. DNA-dependent RNA polymerase catalyzes the transcription of DNA into RNA using the four ribonucleoside triphosphates as substrates. This chain is DNA-directed RNA polymerase subunit beta, found in Orientia tsutsugamushi (strain Boryong) (Rickettsia tsutsugamushi).